An 85-amino-acid chain; its full sequence is MPRPALRSRSLRRIYVKLPSGKTAIHYERKKNDISKCAMCKKPLHGVKTNFLHKYGKSEKRPERPFGGYLCSSCLAQLIKAMVRQ.

Belongs to the eukaryotic ribosomal protein eL34 family.

This is Large ribosomal subunit protein eL34 from Saccharolobus islandicus (strain Y.N.15.51 / Yellowstone #2) (Sulfolobus islandicus).